The chain runs to 225 residues: Methyl-CpG-binding domain-containing protein 6 (225 aa).

The tract at residues 25–92 is disordered; sequence GDGTLDSSAK…PGWRVEDKIR (68 aa). An MBD domain is found at 71-146; sequence RKRAAPGDNW…ENTYFNPDHF (76 aa).

Homodimer and heterodimer with MBD5. Interacts with DDM1 via its MBD domain. Interacts with NTF2, RPS2C, HDA6 and AGO4. In terms of tissue distribution, expressed in rosette leaves, buds, flowers, stems, mature seeds and roots.

The protein resides in the nucleus. Its subcellular location is the chromosome. It is found in the nucleolus. Functionally, transcriptional regulator that binds CpG, CpNpN and CpNpG (N is A, T, or C) islands in promoters regardless the DNA methylation status. Plays probably a role in gene silencing. May associate with histone deacetylase proteins (HDAC). Required for nucleolar dominance that consist in the silencing of rRNA genes inherited from one progenitor in genetic hybrids. Recruited to rRNA genes in a DRM2-dependent manner. Maintains gene silencing by interacting with RNA binding proteins (e.g. NTF2, RPS2C, HDA6 and AGO4) and by regulating DNA methylation status. The chain is Methyl-CpG-binding domain-containing protein 6 from Arabidopsis thaliana (Mouse-ear cress).